The following is a 119-amino-acid chain: Fluoride-specific ion channel FluC 2 (119 aa).

A helical transmembrane segment spans residues 46–66; sequence FALGLLTFAGVTGDAALLVGV. The Na(+) site is built by Gly70 and Thr73. The chain crosses the membrane as a helical span at residues 96–116; sequence LNAVGNLACALVGIGLAWGIV.

The protein belongs to the fluoride channel Fluc/FEX (TC 1.A.43) family.

It localises to the cell membrane. It carries out the reaction fluoride(in) = fluoride(out). Its activity is regulated as follows. Na(+) is not transported, but it plays an essential structural role and its presence is essential for fluoride channel function. In terms of biological role, fluoride-specific ion channel. Important for reducing fluoride concentration in the cell, thus reducing its toxicity. The polypeptide is Fluoride-specific ion channel FluC 2 (Haloarcula marismortui (strain ATCC 43049 / DSM 3752 / JCM 8966 / VKM B-1809) (Halobacterium marismortui)).